Consider the following 156-residue polypeptide: Cytochrome c-type biogenesis protein CcmE (156 aa).

Over 1-8 (MNPLRRKR) the chain is Cytoplasmic. Residues 9–29 (LLIILAILAGVGIAVGLAMSA) form a helical; Signal-anchor for type II membrane protein membrane-spanning segment. Over 30–156 (LRENINLFYT…RIRSLPRRAK (127 aa)) the chain is Periplasmic. Residues H124 and Y128 each coordinate heme.

It belongs to the CcmE/CycJ family.

The protein localises to the cell inner membrane. Functionally, heme chaperone required for the biogenesis of c-type cytochromes. Transiently binds heme delivered by CcmC and transfers the heme to apo-cytochromes in a process facilitated by CcmF and CcmH. This Pseudomonas fluorescens protein is Cytochrome c-type biogenesis protein CcmE.